Reading from the N-terminus, the 110-residue chain is Hydrogenase maturation factor HypA (110 aa).

Histidine 2 contributes to the Ni(2+) binding site. Positions 70, 73, 86, and 89 each coordinate Zn(2+).

The protein belongs to the HypA/HybF family.

In terms of biological role, involved in the maturation of [NiFe] hydrogenases. Required for nickel insertion into the metal center of the hydrogenase. This chain is Hydrogenase maturation factor HypA, found in Geotalea daltonii (strain DSM 22248 / JCM 15807 / FRC-32) (Geobacter daltonii).